The chain runs to 162 residues: Circumsporozoite protein-related antigen (162 aa).

The first 16 residues, M1 to F16, serve as a signal peptide directing secretion. Disordered stretches follow at residues K24–G44 and P109–H162. Residues S114 to N130 are compositionally biased toward low complexity. Positions P137–H162 are enriched in polar residues.

The polypeptide is Circumsporozoite protein-related antigen (Plasmodium falciparum).